Consider the following 995-residue polypeptide: Zinc finger protein ZFPM1 (995 aa).

The span at 1-14 shows a compositional bias: basic residues; that stretch reads MSRRKQSNPRQIKR. Residues 1-103 form a disordered region; sequence MSRRKQSNPR…EAAMASPWSG (103 aa). The span at 15-36 shows a compositional bias: basic and acidic residues; that stretch reads SLRDMEAGEEAKAMDSSPKEQE. Acidic residues-rich tracts occupy residues 67 to 78 and 86 to 95; these read SPEDPEDMEGQE and EEKEEKEEEA. A phosphoserine mark is found at Ser-99 and Ser-143. The CCHC FOG-type 1 zinc-finger motif lies at 249–282; that stretch reads VINKDVFPCKDCGIWYRSERNLQAHLLYYCASRQ. Residues Cys-257, Cys-260, His-273, and Cys-278 each contribute to the Zn(2+) site. Ser-286 carries the phosphoserine modification. 3 C2H2-type zinc fingers span residues 303–327, 333–355, and 361–384; these read RVCPFPQCRKSCPSASSLEIHMRSH, FVCLICLSAFTTKANCERHLKVH, and GVCHNCGFISTTRDILYSHLVTNH. Residues 343–354 form an interaction with TACC3 region; that stretch reads TTKANCERHLKV. A phosphoserine mark is found at Ser-397, Ser-497, and Ser-500. The interval 424-526 is disordered; it reads PLVPADKAPT…SSPGPGELTM (103 aa). Over residues 509–525 the composition is skewed to low complexity; it reads ELSSPTPGSSPGPGELT. The segment at 584 to 617 adopts a CCHC FOG-type 2 zinc-finger fold; it reads FSGTKGATCFECEITFNNINNFYVHKRLYCSGRR. Cys-592, Cys-595, His-608, and Cys-613 together coordinate Zn(2+). A disordered region spans residues 616 to 694; sequence RRAPEDPPTV…SVDDAEDDPS (79 aa). The span at 630–652 shows a compositional bias: low complexity; it reads AATGPARAPAGAAAEPDPSRSSP. 2 positions are modified to phosphoserine: Ser-651 and Ser-684. The segment at 690–723 adopts a CCHC FOG-type 3 zinc-finger fold; sequence EDDPSRTLCEACNIRFSRHETYTVHKRYYCASRH. 4 residues coordinate Zn(2+): Cys-698, Cys-701, His-714, and Cys-719. Residues 721–827 form a disordered region; it reads SRHDPPPRRP…PRRQSPDAPT (107 aa). 2 stretches are compositionally biased toward pro residues: residues 728-740 and 764-779; these read RRPPAPTTAPGPA and GAPPPAAGPAPVPVVP. Positions 785–800 are enriched in low complexity; the sequence is LPSSPRPGSASAGPAP. A Phosphoserine modification is found at Ser-803. Residues 811–817 form an interaction with CTBP2 region; that stretch reads PIDLSKR. Residue Ser-822 is modified to Phosphoserine. The CCHC FOG-type 4 zinc finger occupies 830-863; that stretch reads PALADYHECTACRVSFHSLEAYLAHKKYSCPAAP. Positions 838, 841, 854, and 859 each coordinate Zn(2+). A C2H2-type 4 zinc finger spans residues 868–891; sequence ALCPYCPPNGRVRGDLVEHLRQAH. The tract at residues 892–960 is disordered; it reads GLQVAKPAAS…APAPAPGGGG (69 aa). The segment covering 908–922 has biased composition (basic and acidic residues); the sequence is TPAERAPRDSPDGRA. A phosphoserine mark is found at Ser-925 and Ser-927. The CCHC FOG-type 5 zinc finger occupies 957–990; sequence GGGGGHRYCRLCNIRFSSLSTFIAHKKYYCSSHA. The Zn(2+) site is built by Cys-965, Cys-968, His-981, and Cys-986.

The protein belongs to the FOG (Friend of GATA) family. In terms of assembly, interacts with the N-terminal zinc-finger of GATA1, GATA2 and GATA3. Interacts with corepressor CTBP2; this interaction is however not essential for corepressor activity in erythropoiesis. Interacts with TACC3. In terms of tissue distribution, mainly expressed in hematopoietic tissues. Expressed in the spleen, a primary site of hematopoiesis in the adult mouse, as well as in the liver and testis, but not in the heart, brain, lung, kidney, or skeletal muscle. Among hematopoietic cell lines, it is strongly expressed in erythroid and megakaryocytic cell lines. Expressed at low level in several lymphoid and early myeloid cell lines. Not expressed in mast cell and macrophage lines. Expressed in the heart, where it colocalizes with GATA4, GATA5 and GATA6.

The protein resides in the nucleus. In terms of biological role, transcription regulator that plays an essential role in erythroid and megakaryocytic cell differentiation. Essential cofactor that acts via the formation of a heterodimer with transcription factors of the GATA family GATA1, GATA2 and GATA3. Such heterodimer can both activate or repress transcriptional activity, depending on the cell and promoter context. The heterodimer formed with GATA proteins is essential to activate expression of genes such as NFE2, ITGA2B, alpha- and beta-globin, while it represses expression of KLF1. May be involved in regulation of some genes in gonads. May also be involved in cardiac development, in a non-redundant way with ZFPM2/FOG2. This chain is Zinc finger protein ZFPM1 (Zfpm1), found in Mus musculus (Mouse).